A 102-amino-acid chain; its full sequence is Major basic nuclear protein 2 (102 aa).

A compositionally biased stretch (basic residues) spans 1–11 (MKAMKATKKAM). Residues 1-43 (MKAMKATKKAMTKTGLAEALAPKPSSARRIAPPSSRAWPPSAQ) are disordered. Residues 21-42 (APKPSSARRIAPPSSRAWPPSA) are compositionally biased toward low complexity.

It is found in the nucleus. The sequence is that of Major basic nuclear protein 2 (HCc2) from Crypthecodinium cohnii (Dinoflagellate).